The primary structure comprises 279 residues: Sperm acrosome membrane-associated protein 1 (279 aa).

A signal peptide spans 1–29; it reads MKSRGAGCSARLLLTVGWLLLAGLQSTCG. The Extracellular portion of the chain corresponds to 30-221; the sequence is INVTAIQDPS…VIICIFVIFV (192 aa). Asn31 is a glycosylation site (N-linked (GlcNAc...) asparagine). The segment at 39–74 is disordered; the sequence is SLAREGEGEPEGDEEPENDSETEKEPQAEAEDDSEG. The span at 46–58 shows a compositional bias: acidic residues; that stretch reads GEPEGDEEPENDS. The chain crosses the membrane as a helical span at residues 222 to 242; it reads LIFIIINWTAVKDFWAKASTT. Residues 243–279 lie on the Cytoplasmic side of the membrane; that stretch reads EIQSELSSMRYKDSTSLDQSPTDIPGHEDDALSEWNE. A Phosphotyrosine modification is found at Tyr253. Residues 253–279 are disordered; that stretch reads YKDSTSLDQSPTDIPGHEDDALSEWNE. Phosphoserine occurs at positions 262 and 275.

As to quaternary structure, interacts with CYLC1; the interaction may be relevant for proper acrosome attachment to the nuclear envelope. Post-translationally, N-glycosylated.

It is found in the cytoplasmic vesicle. The protein localises to the secretory vesicle. Its subcellular location is the acrosome inner membrane. Its function is as follows. Plays a role in acrosome expansion and establishment of normal sperm morphology during spermatogenesis. Important for male fertility. In Bos taurus (Bovine), this protein is Sperm acrosome membrane-associated protein 1 (SPACA1).